Reading from the N-terminus, the 177-residue chain is Probable inosine/xanthosine triphosphatase (177 aa).

It belongs to the YjjX NTPase family. Homodimer. Mg(2+) serves as cofactor. The cofactor is Mn(2+).

The catalysed reaction is XTP + H2O = XDP + phosphate + H(+). It catalyses the reaction ITP + H2O = IDP + phosphate + H(+). Phosphatase that hydrolyzes non-canonical purine nucleotides such as XTP and ITP to their respective diphosphate derivatives. Probably excludes non-canonical purines from DNA/RNA precursor pool, thus preventing their incorporation into DNA/RNA and avoiding chromosomal lesions. This Pyrobaculum islandicum (strain DSM 4184 / JCM 9189 / GEO3) protein is Probable inosine/xanthosine triphosphatase.